The sequence spans 131 residues: MSWQAYVDDHLMCEIEGNHLSAAAIIGHDGVVWAQSATFPQVKPEEITGIMNDFNEPGSLAPTGLYLGGTKYMVIQGEPGAVIRGKKGPGGVTIKKTTMALIIGIYDEPMAPGQCNMIVERLGDYLLEQGF.

This sequence belongs to the profilin family. In terms of assembly, occurs in many kinds of cells as a complex with monomeric actin in a 1:1 ratio.

The protein localises to the cytoplasm. The protein resides in the cytoskeleton. Binds to actin and affects the structure of the cytoskeleton. At high concentrations, profilin prevents the polymerization of actin, whereas it enhances it at low concentrations. By binding to PIP2, it inhibits the formation of IP3 and DG. The polypeptide is Profilin-2 (Ambrosia artemisiifolia (Common ragweed)).